Here is a 323-residue protein sequence, read N- to C-terminus: Pantothenate kinase (323 aa).

Gly101–Ser108 is a binding site for ATP.

The protein belongs to the prokaryotic pantothenate kinase family.

The protein localises to the cytoplasm. The catalysed reaction is (R)-pantothenate + ATP = (R)-4'-phosphopantothenate + ADP + H(+). It functions in the pathway cofactor biosynthesis; coenzyme A biosynthesis; CoA from (R)-pantothenate: step 1/5. The chain is Pantothenate kinase from Xanthobacter autotrophicus (strain ATCC BAA-1158 / Py2).